The following is a 364-amino-acid chain: MAPLPISSIRVGKIDDVQELIKSKPNKVPERFIREEYERGVVVSSLKTHHLHHQIPVIDLSKLSKPDNDDFFFEILKLSQACEDWGFFQVINHGIEVEVVEDIEEVASEFFDMPLEEKKKYPMEPGTVQGYGQAFIFSEDQKLDWCNMFALGVHPPQIRNPKLWPSKPARFSESLEGYSKEIRELCKRLLKYIAISLGLKEERFEEMFGEAVQAVRMNYYPPCSSPDLVLGLSPHSDGSALTVLQQSKNSCVGLQILKDNTWVPVKPLPNALVINIGDTIEVLSNGKYKSVEHRAVTNREKERLTIVTFYAPNYEVEIEPMSELVDDETNPCKYRSYNHGDYSYHYVSNKLQGKKSLDFAKILN.

The Fe2OG dioxygenase domain occupies 203–312; that stretch reads RFEEMFGEAV…RLTIVTFYAP (110 aa). Fe cation is bound by residues H235, D237, and H293. R303 is a 2-oxoglutarate binding site.

The protein belongs to the iron/ascorbate-dependent oxidoreductase family. In terms of assembly, monomer. Fe(2+) serves as cofactor. L-ascorbate is required as a cofactor. As to expression, expressed in the vasculature throughout the plant and in the buds and root tips.

The protein resides in the cytoplasm. The enzyme catalyses (11R)-methyl carlactonoate + 2-oxoglutarate + O2 = (11R)-hydroxymethyl carlactonoate + succinate + CO2. In terms of biological role, oxoglutarate-dependent dioxygenase involved in the biosynthesis of strigolactone natural products, bioactive compounds promoting plant fitness and soil microbe interactions, but preventing shoot branching. Catalyzes the hydroxylation of (11R)-methyl carlactonoate (MeCLA) to produce (11R)-hydroxymethyl carlactonoate (1'-HO-MeCLA) in final stages of strigolactone biosynthesis, downstream of MAX1 and CLAMT. The chain is Protein LATERAL BRANCHING OXIDOREDUCTASE 1 from Arabidopsis thaliana (Mouse-ear cress).